A 91-amino-acid chain; its full sequence is Ice-structuring protein (91 aa).

The N-terminal stretch at 1-21 (MALSLFTVGQLIFLFWTMRIT) is a signal peptide. The propeptide at 22–39 (EANPDPAAKAVPAAAAPD) is removed by a dipeptidylpeptidase.

Belongs to the type-I AFP family.

It is found in the secreted. Contributes to protect fish blood from freezing at subzero sea water temperatures. Lowers the blood freezing point. Binds to nascent ice crystals and prevents further growth. In Pseudopleuronectes americanus (Winter flounder), this protein is Ice-structuring protein.